We begin with the raw amino-acid sequence, 480 residues long: Aspartyl/glutamyl-tRNA(Asn/Gln) amidotransferase subunit B (480 aa).

Belongs to the GatB/GatE family. GatB subfamily. Heterotrimer of A, B and C subunits.

The catalysed reaction is L-glutamyl-tRNA(Gln) + L-glutamine + ATP + H2O = L-glutaminyl-tRNA(Gln) + L-glutamate + ADP + phosphate + H(+). It carries out the reaction L-aspartyl-tRNA(Asn) + L-glutamine + ATP + H2O = L-asparaginyl-tRNA(Asn) + L-glutamate + ADP + phosphate + 2 H(+). Its function is as follows. Allows the formation of correctly charged Asn-tRNA(Asn) or Gln-tRNA(Gln) through the transamidation of misacylated Asp-tRNA(Asn) or Glu-tRNA(Gln) in organisms which lack either or both of asparaginyl-tRNA or glutaminyl-tRNA synthetases. The reaction takes place in the presence of glutamine and ATP through an activated phospho-Asp-tRNA(Asn) or phospho-Glu-tRNA(Gln). This chain is Aspartyl/glutamyl-tRNA(Asn/Gln) amidotransferase subunit B, found in Hahella chejuensis (strain KCTC 2396).